Here is a 356-residue protein sequence, read N- to C-terminus: Tyrosine recombinase XerS (356 aa).

In terms of domain architecture, Core-binding (CB) spans 16 to 121; sequence LMPWYVLEYY…ALSSLYKYLT (106 aa). Positions 169-354 constitute a Tyr recombinase domain; sequence GFLTYIDQEH…VSDEQKNALD (186 aa). Active-site residues include R210, K234, H306, R309, and H332. Residue Y341 is the O-(3'-phospho-DNA)-tyrosine intermediate of the active site.

This sequence belongs to the 'phage' integrase family. XerS subfamily.

The protein resides in the cytoplasm. FtsK is required for recombination. Site-specific tyrosine recombinase, which acts by catalyzing the cutting and rejoining of the recombining DNA molecules. Essential to convert dimers of the bacterial chromosome into monomers to permit their segregation at cell division. In Streptococcus pneumoniae (strain 70585), this protein is Tyrosine recombinase XerS.